A 152-amino-acid polypeptide reads, in one-letter code: Putative RING finger protein 157L (152 aa).

Residues 111–146 (CVVCYENEICIKIQPCNHFVVCKSCFNRLNTCPMCR) form an RING-type zinc finger.

This sequence belongs to the IIV-6 157L family.

The chain is Putative RING finger protein 157L from Invertebrate iridescent virus 6 (IIV-6).